Consider the following 153-residue polypeptide: Regulatory protein RecX (153 aa).

It belongs to the RecX family.

The protein localises to the cytoplasm. In terms of biological role, modulates RecA activity. The protein is Regulatory protein RecX of Mannheimia succiniciproducens (strain KCTC 0769BP / MBEL55E).